The following is a 162-amino-acid chain: Caveolin-2 (162 aa).

At 1–86 the chain is on the cytoplasmic side; the sequence is MGLETEKADV…FEISKYVIYK (86 aa). Tyr-19 carries the phosphotyrosine; by SRC modification. Phosphoserine is present on residues Ser-20 and Ser-23. Phosphotyrosine; by SRC is present on Tyr-27. A Phosphoserine modification is found at Ser-36. The segment at residues 87-107 is an intramembrane region (helical); sequence FLTVFLAIPLAFIAGILFATL. At 108-162 the chain is on the cytoplasmic side; sequence SCLHIWILMPFVKTCLMVLPSVQTIWKSVTDVVIGPLCTSVGRIFSSVSMQLSHD.

Belongs to the caveolin family. Monomer or homodimer. Interacts with CAV1; the interaction forms a stable heterooligomeric complex that is required for targeting to lipid rafts and for caveolae formation. Tyrosine phosphorylated forms do not form heterooligomers with the Tyr-19-phosphorylated form existing as a monomer or dimer and the Tyr-27-form as a monomer only. Interacts (tyrosine phosphorylated form) with the SH2 domain-containing proteins, RASA1, NCK1 and SRC. Interacts (tyrosine phosphorylated form) with INSR; the interaction (Tyr-27-phosphorylated form) is increased on insulin stimulation. Interacts (Tyr-19-phosphorylated form) with MAPK1 (phosphorylated form); the interaction, promoted by insulin, leads to nuclear location and MAPK1 activation. Interacts with STAT3; the interaction is increased on insulin-induced tyrosine phosphorylation leading to STAT activation. Post-translationally, phosphorylated on serine and tyrosine residues. CAV1 promotes phosphorylation on Ser-23 which targets the complex to the plasma membrane, lipid rafts and caveolae. Phosphorylation on Ser-36 appears to modulate mitosis in endothelial cells. Phosphorylation on both Tyr-19 and Tyr-27 is required for insulin-induced 'Ser-727' phosphorylation of STAT3 and its activation. Phosphorylation on Tyr-19 is required for insulin-induced phosphorylation of MAPK1 and DNA binding of STAT3. Tyrosine phosphorylation is induced by both EGF and insulin. As to expression, in the retina, mainly expressed in vessels, but also diffuse expression in the inner and outer plexiform layers and in the inner nuclear layer.

It localises to the nucleus. The protein localises to the cytoplasm. Its subcellular location is the golgi apparatus membrane. It is found in the cell membrane. The protein resides in the membrane. It localises to the caveola. In terms of biological role, may act as a scaffolding protein within caveolar membranes. Interacts directly with G-protein alpha subunits and can functionally regulate their activity. Acts as an accessory protein in conjunction with CAV1 in targeting to lipid rafts and driving caveolae formation. The Ser-36 phosphorylated form has a role in modulating mitosis in endothelial cells. Positive regulator of cellular mitogenesis of the MAPK signaling pathway. Required for the insulin-stimulated nuclear translocation and activation of MAPK1 and STAT3, and the subsequent regulation of cell cycle progression. The chain is Caveolin-2 (Cav2) from Rattus norvegicus (Rat).